We begin with the raw amino-acid sequence, 306 residues long: NAD kinase 1 (306 aa).

Residue D67 is the Proton acceptor of the active site. NAD(+) is bound by residues 67–68 (DG), 149–150 (NE), and D181.

The protein belongs to the NAD kinase family. Requires a divalent metal cation as cofactor.

The protein localises to the cytoplasm. The catalysed reaction is NAD(+) + ATP = ADP + NADP(+) + H(+). Functionally, involved in the regulation of the intracellular balance of NAD and NADP, and is a key enzyme in the biosynthesis of NADP. Catalyzes specifically the phosphorylation on 2'-hydroxyl of the adenosine moiety of NAD to yield NADP. In Thermosynechococcus vestitus (strain NIES-2133 / IAM M-273 / BP-1), this protein is NAD kinase 1.